The sequence spans 445 residues: tRNA modification GTPase MnmE (445 aa).

Residues R24, E81, and K121 each contribute to the (6S)-5-formyl-5,6,7,8-tetrahydrofolate site. Positions 218 to 369 (GLTVVIAGPP…LLEALVGFAR (152 aa)) constitute a TrmE-type G domain. Residues 228 to 233 (NAGKST), 247 to 253 (SPHAGTT), 272 to 275 (DTAG), and 350 to 352 (SAR) each bind GTP. Positions 232 and 253 each coordinate Mg(2+). Residue K445 participates in (6S)-5-formyl-5,6,7,8-tetrahydrofolate binding.

This sequence belongs to the TRAFAC class TrmE-Era-EngA-EngB-Septin-like GTPase superfamily. TrmE GTPase family. Homodimer. Heterotetramer of two MnmE and two MnmG subunits. K(+) is required as a cofactor.

It is found in the cytoplasm. Functionally, exhibits a very high intrinsic GTPase hydrolysis rate. Involved in the addition of a carboxymethylaminomethyl (cmnm) group at the wobble position (U34) of certain tRNAs, forming tRNA-cmnm(5)s(2)U34. The polypeptide is tRNA modification GTPase MnmE (Bradyrhizobium sp. (strain BTAi1 / ATCC BAA-1182)).